Reading from the N-terminus, the 448-residue chain is Trigger factor (448 aa).

In terms of domain architecture, PPIase FKBP-type spans 162–243; the sequence is GDFVQIDLNA…VRTVKEKELP (82 aa).

It belongs to the FKBP-type PPIase family. Tig subfamily.

It is found in the cytoplasm. The enzyme catalyses [protein]-peptidylproline (omega=180) = [protein]-peptidylproline (omega=0). In terms of biological role, involved in protein export. Acts as a chaperone by maintaining the newly synthesized protein in an open conformation. Functions as a peptidyl-prolyl cis-trans isomerase. This is Trigger factor from Salinispora arenicola (strain CNS-205).